Consider the following 328-residue polypeptide: Embigin (328 aa).

The first 33 residues, 1–33 (MRSHTGLRALVAPGCSLLLLYLLAATRPDRAVG), serve as a signal peptide directing secretion. Residues 34-264 (DPADSAFTSL…VLSFMVPLKP (231 aa)) lie on the Extracellular side of the membrane. Residues N55, N62, N75, N100, N117, N189, N196, N214, and N219 are each glycosylated (N-linked (GlcNAc...) asparagine). Ig-like domains are found at residues 67 to 160 (EQTR…RVPK) and 159 to 254 (PKVH…IKLV). 2 disulfide bridges follow: C88–C144 and C180–C238. Residues 265 to 285 (FLAIIAEVILLVAIILLCEVY) form a helical membrane-spanning segment. Topologically, residues 286–328 (TQKKKNDPDDGKEFEQIEQLKSDDSNGIENNVPRYRKTDSGDQ) are cytoplasmic. Positions 289–309 (KKNDPDDGKEFEQIEQLKSDD) are enriched in basic and acidic residues. Positions 289–328 (KKNDPDDGKEFEQIEQLKSDDSNGIENNVPRYRKTDSGDQ) are disordered. The residue at position 310 (S310) is a Phosphoserine.

Interacts with SLC16A1, SLC16A6 and SLC16A7. Post-translationally, N-glycosylated. Detected in prostate, mammary gland and erythrocytes (at protein level). Detected in testis, brain, prostate, heart, kidney, liver, mammary gland and lung.

It is found in the cell membrane. It localises to the synapse. In terms of biological role, plays a role in the outgrowth of motoneurons and in the formation of neuromuscular junctions. Following muscle denervation, promotes nerve terminal sprouting and the formation of additional acetylcholine receptor clusters at synaptic sites without affecting terminal Schwann cell number or morphology. Delays the retraction of terminal sprouts following re-innervation of denervated endplates. Plays a role in targeting the monocarboxylate transporters SLC16A1, SLC16A6 and SLC16A7 to the cell membrane. This chain is Embigin (Emb), found in Rattus norvegicus (Rat).